Reading from the N-terminus, the 387-residue chain is UDP-Gal:alpha-D-GlcNAc-diphosphoundecaprenol alpha-1,3-galactosyltransferase (387 aa).

This sequence belongs to the glycosyltransferase group 1 family. Glycosyltransferase 4 subfamily. Requires Mg(2+) as cofactor. It depends on Mn(2+) as a cofactor. Fe(2+) serves as cofactor.

The catalysed reaction is N-acetyl-alpha-D-glucosaminyl-di-trans,octa-cis-undecaprenyl diphosphate + UDP-alpha-D-galactose = alpha-D-Gal-(1-&gt;3)-alpha-D-GlcNAc-di-trans,octa-cis-undecaprenyl diphosphate + UDP + H(+). It participates in bacterial outer membrane biogenesis; LPS O-antigen biosynthesis. In terms of biological role, involved in the biosynthesis of the lipopolysaccharide (LPS) O-antigen region. Catalyzes the transfer of galactose from UDP-galactose to GlcNAc-undecaprenyl diphosphate via an alpha1,3-linkage. Has strict substrate specificity. The protein is UDP-Gal:alpha-D-GlcNAc-diphosphoundecaprenol alpha-1,3-galactosyltransferase of Escherichia coli.